The following is a 519-amino-acid chain: T-box transcription factor TBX5 (519 aa).

Positions 1–46 are disordered; that stretch reads MADTEEAYGMPDTPVEAEPKELQCEPKQDNQLGASSKTPTSPPAAF. A compositionally biased stretch (basic and acidic residues) spans 17–28; the sequence is AEPKELQCEPKQ. The segment covering 29-39 has biased composition (polar residues); sequence DNQLGASSKTP. Positions 63–238 form a DNA-binding region, T-box; that stretch reads LWLKFHEVGT…NNPFAKGFRG (176 aa). Disordered stretches follow at residues 254-282, 293-312, and 326-372; these read EYPVVPRSTVRQKVSSNHSPFSQETRNIT, CENGVSSTSQDLLPSSSAYT, and KRKV…TSFR. A compositionally biased stretch (polar residues) spans 262-282; it reads TVRQKVSSNHSPFSQETRNIT. A compositionally biased stretch (low complexity) spans 298 to 309; it reads SSTSQDLLPSSS. The span at 328–342 shows a compositional bias: basic and acidic residues; that stretch reads KVSEEPAEHSYKKPY.

As to quaternary structure, monomer. Homodimer (via the T-box); binds DNA as homodimer.

The protein localises to the nucleus. It localises to the cytoplasm. Its function is as follows. DNA-binding protein that regulates the transcription of several genes and is involved in heart development and limb pattern formation. May bind to the core DNA motif of promoters. In Xenopus laevis (African clawed frog), this protein is T-box transcription factor TBX5 (tbx5).